Here is a 136-residue protein sequence, read N- to C-terminus: Protein K5 (136 aa).

The protein belongs to the poxviridae K5 protein family.

The sequence is that of Protein K5 from Homo sapiens (Human).